A 241-amino-acid polypeptide reads, in one-letter code: Lipopolysaccharide export system ATP-binding protein LptB (241 aa).

One can recognise an ABC transporter domain in the interval leucine 4–glutamate 237. Glycine 36–threonine 43 serves as a coordination point for ATP.

This sequence belongs to the ABC transporter superfamily. Outer membrane lipopolysaccharide export (TC 1.B.42) family. Component of the lipopolysaccharide transport and assembly complex. The LptBFG transporter is composed of two ATP-binding proteins (LptB) and two transmembrane proteins (LptF and LptG).

It is found in the cytoplasm. Its subcellular location is the cell inner membrane. Functionally, part of the ABC transporter complex LptBFG involved in the translocation of lipopolysaccharide (LPS) from the inner membrane to the outer membrane. Probably responsible for energy coupling to the transport system. The chain is Lipopolysaccharide export system ATP-binding protein LptB (lptB) from Escherichia coli O157:H7.